Consider the following 139-residue polypeptide: Actin-depolymerizing factor 9 (139 aa).

The ADF-H domain occupies 7 to 139 (GLAVNDECKF…SLDIIRARAH (133 aa)).

This sequence belongs to the actin-binding proteins ADF family.

Actin-depolymerizing protein. Severs actin filaments (F-actin) and binds to actin monomers. This is Actin-depolymerizing factor 9 (ADF9) from Oryza sativa subsp. japonica (Rice).